Here is a 473-residue protein sequence, read N- to C-terminus: 3-isopropylmalate dehydratase large subunit (473 aa).

[4Fe-4S] cluster contacts are provided by Cys351, Cys414, and Cys417.

This sequence belongs to the aconitase/IPM isomerase family. LeuC type 1 subfamily. Heterodimer of LeuC and LeuD. [4Fe-4S] cluster is required as a cofactor.

The catalysed reaction is (2R,3S)-3-isopropylmalate = (2S)-2-isopropylmalate. It functions in the pathway amino-acid biosynthesis; L-leucine biosynthesis; L-leucine from 3-methyl-2-oxobutanoate: step 2/4. Catalyzes the isomerization between 2-isopropylmalate and 3-isopropylmalate, via the formation of 2-isopropylmaleate. This chain is 3-isopropylmalate dehydratase large subunit, found in Variovorax paradoxus (strain S110).